Consider the following 189-residue polypeptide: Probable nicotinate-nucleotide adenylyltransferase (189 aa).

Belongs to the NadD family.

It catalyses the reaction nicotinate beta-D-ribonucleotide + ATP + H(+) = deamido-NAD(+) + diphosphate. It participates in cofactor biosynthesis; NAD(+) biosynthesis; deamido-NAD(+) from nicotinate D-ribonucleotide: step 1/1. In terms of biological role, catalyzes the reversible adenylation of nicotinate mononucleotide (NaMN) to nicotinic acid adenine dinucleotide (NaAD). This chain is Probable nicotinate-nucleotide adenylyltransferase, found in Bacillus pumilus (strain SAFR-032).